The following is a 290-amino-acid chain: Ribosomal large subunit pseudouridine synthase B (290 aa).

The 73-residue stretch at 3 to 75 folds into the S4 RNA-binding domain; the sequence is EKLQKVLARA…ICRVLAYYKP (73 aa). Asp-110 serves as the catalytic Nucleophile. The disordered stretch occupies residues 251 to 290; sequence SSKVAVEKDRRRMKANQIRRAVKRHSQVSGSRRSGGRNNG.

The protein belongs to the pseudouridine synthase RsuA family.

It catalyses the reaction uridine(2605) in 23S rRNA = pseudouridine(2605) in 23S rRNA. In terms of biological role, responsible for synthesis of pseudouridine from uracil-2605 in 23S ribosomal RNA. In Shigella flexneri, this protein is Ribosomal large subunit pseudouridine synthase B (rluB).